The sequence spans 288 residues: Polyamine aminopropyltransferase (288 aa).

The region spanning Ser9–Met242 is the PABS domain. Residue Gln36 participates in S-methyl-5'-thioadenosine binding. Spermidine is bound by residues His67 and Asp91. S-methyl-5'-thioadenosine-binding positions include Glu111 and Asn143 to Gly144. Catalysis depends on Asp162, which acts as the Proton acceptor. Pro169 contributes to the S-methyl-5'-thioadenosine binding site.

The protein belongs to the spermidine/spermine synthase family. Homodimer or homotetramer.

It localises to the cytoplasm. It carries out the reaction S-adenosyl 3-(methylsulfanyl)propylamine + putrescine = S-methyl-5'-thioadenosine + spermidine + H(+). It participates in amine and polyamine biosynthesis; spermidine biosynthesis; spermidine from putrescine: step 1/1. Catalyzes the irreversible transfer of a propylamine group from the amino donor S-adenosylmethioninamine (decarboxy-AdoMet) to putrescine (1,4-diaminobutane) to yield spermidine. The chain is Polyamine aminopropyltransferase from Prochlorococcus marinus (strain NATL1A).